A 492-amino-acid polypeptide reads, in one-letter code: Bifunctional protein GlmU (492 aa).

Residues 1–241 (MTFRGDTAVV…SALVAGVNDR (241 aa)) form a pyrophosphorylase region. Residues 12–15 (LAAG), Lys-26, Gln-83, and 88–89 (GT) each bind UDP-N-acetyl-alpha-D-glucosamine. A Mg(2+)-binding site is contributed by Asp-114. UDP-N-acetyl-alpha-D-glucosamine contacts are provided by Gly-151, Glu-166, Asn-181, and Asn-239. Asn-239 serves as a coordination point for Mg(2+). The linker stretch occupies residues 242–262 (VQLAQLGAELNRRIVAAHQMA). Residues 263–492 (GVTVIDPATT…TPPPDADHPP (230 aa)) are N-acetyltransferase. Residues Arg-344 and Lys-362 each coordinate UDP-N-acetyl-alpha-D-glucosamine. His-374 acts as the Proton acceptor in catalysis. UDP-N-acetyl-alpha-D-glucosamine contacts are provided by Tyr-377 and Asn-388. Acetyl-CoA is bound by residues Ala-391, 397–398 (NY), and Ala-434. The disordered stretch occupies residues 443–492 (PPGALAVSGGPQRNIEDWVQQKRPGTPSAEAARKASAEQSTPPPDADHPP).

This sequence in the N-terminal section; belongs to the N-acetylglucosamine-1-phosphate uridyltransferase family. The protein in the C-terminal section; belongs to the transferase hexapeptide repeat family. As to quaternary structure, homotrimer. It depends on Mg(2+) as a cofactor.

The protein localises to the cytoplasm. It catalyses the reaction alpha-D-glucosamine 1-phosphate + acetyl-CoA = N-acetyl-alpha-D-glucosamine 1-phosphate + CoA + H(+). The enzyme catalyses N-acetyl-alpha-D-glucosamine 1-phosphate + UTP + H(+) = UDP-N-acetyl-alpha-D-glucosamine + diphosphate. It participates in nucleotide-sugar biosynthesis; UDP-N-acetyl-alpha-D-glucosamine biosynthesis; N-acetyl-alpha-D-glucosamine 1-phosphate from alpha-D-glucosamine 6-phosphate (route II): step 2/2. Its pathway is nucleotide-sugar biosynthesis; UDP-N-acetyl-alpha-D-glucosamine biosynthesis; UDP-N-acetyl-alpha-D-glucosamine from N-acetyl-alpha-D-glucosamine 1-phosphate: step 1/1. It functions in the pathway bacterial outer membrane biogenesis; LPS lipid A biosynthesis. Functionally, catalyzes the last two sequential reactions in the de novo biosynthetic pathway for UDP-N-acetylglucosamine (UDP-GlcNAc). The C-terminal domain catalyzes the transfer of acetyl group from acetyl coenzyme A to glucosamine-1-phosphate (GlcN-1-P) to produce N-acetylglucosamine-1-phosphate (GlcNAc-1-P), which is converted into UDP-GlcNAc by the transfer of uridine 5-monophosphate (from uridine 5-triphosphate), a reaction catalyzed by the N-terminal domain. The protein is Bifunctional protein GlmU of Mycobacterium ulcerans (strain Agy99).